The chain runs to 125 residues: UPF0102 protein PA4424 (125 aa).

Belongs to the UPF0102 family.

The protein is UPF0102 protein PA4424 of Pseudomonas aeruginosa (strain ATCC 15692 / DSM 22644 / CIP 104116 / JCM 14847 / LMG 12228 / 1C / PRS 101 / PAO1).